The chain runs to 793 residues: PC3-like endoprotease variant A (793 aa).

A signal peptide spans 1 to 29; sequence MNYRGIYRRRYVFVLLLLVAVVNISYGWT. Positions 30-152 are excised as a propeptide; sequence VLKNKDYKRR…QQKILERVKR (123 aa). N-linked (GlcNAc...) asparagine glycans are attached at residues N62 and N190. One can recognise a Peptidase S8 domain in the interval 164 to 486; the sequence is MWYLLNTGQA…FGRLDANAMV (323 aa). Active-site charge relay system residues include D202 and H242. 2 cysteine pairs are disulfide-bonded: C259–C411 and C351–C381. The active-site Charge relay system is S419. The region spanning 495–638 is the P/Homo B domain; it reads LPAQRKCTAA…EERVIDTQTK (144 aa). C501 and C527 form a disulfide bridge.

This sequence belongs to the peptidase S8 family. Furin subfamily. Predominantly in the body column.

Probably involved in the processing of hormone and other protein precursors at sites comprised of pairs of basic amino acid residues. This Hydra vulgaris (Hydra) protein is PC3-like endoprotease variant A.